Here is a 199-residue protein sequence, read N- to C-terminus: Adenylyl-sulfate kinase (199 aa).

The segment at 1 to 22 is disordered; sequence MSESNHITWHDSEVTKKQRQHK. Residue 34 to 41 coordinates ATP; it reads GLSGSGKS. The active-site Phosphoserine intermediate is S108.

Belongs to the APS kinase family.

The enzyme catalyses adenosine 5'-phosphosulfate + ATP = 3'-phosphoadenylyl sulfate + ADP + H(+). The protein operates within sulfur metabolism; hydrogen sulfide biosynthesis; sulfite from sulfate: step 2/3. Functionally, catalyzes the synthesis of activated sulfate. The protein is Adenylyl-sulfate kinase of Staphylococcus epidermidis (strain ATCC 12228 / FDA PCI 1200).